Reading from the N-terminus, the 287-residue chain is Protease HtpX (287 aa).

2 consecutive transmembrane segments (helical) span residues Ile4–Ile24 and Ser33–Ile53. Zn(2+) is bound at residue His139. The active site involves Glu140. Residue His143 coordinates Zn(2+). 2 consecutive transmembrane segments (helical) span residues Leu154 to Ile174 and Ala195 to Phe215. Zn(2+) is bound at residue Glu220.

The protein belongs to the peptidase M48B family. It depends on Zn(2+) as a cofactor.

It is found in the cell inner membrane. This Shewanella piezotolerans (strain WP3 / JCM 13877) protein is Protease HtpX.